The following is a 616-amino-acid chain: DNA-binding protein RFX5 (616 aa).

Positions 1-29 (MAEDEPDAKSPKTGGRAPPGGAEAGEPTT) are disordered. A2 carries the N-acetylalanine modification. The residue at position 10 (S10) is a Phosphoserine. Residues 13-29 (TGGRAPPGGAEAGEPTT) show a composition bias toward low complexity. Residues 25–90 (GEPTTLLQRL…PSTLSNEEYM (66 aa)) form an N-terminal domain region. Positions 62 to 66 (LYLYL) are leucine-rich region; critical for dimer formation and for interaction with RFXAP. Positions 92–168 (AYRWIRNHLE…YCYSGIRRKT (77 aa)) form a DNA-binding region, RFX-type winged-helix. The short motif at 173–178 (PPLPGL) is the PxLPxI/L motif; mediates interaction with RFXANK element. Position 185 is a phosphoserine (S185). Disordered stretches follow at residues 252–314 (AEED…ESSA) and 391–616 (LPGP…ATPP). The span at 276–293 (GAHKKPERLAQPPKDLEA) shows a compositional bias: basic and acidic residues. The segment covering 391–401 (LPGPGPGPGRA) has biased composition (pro residues). Basic and acidic residues predominate over residues 424 to 434 (GPHDKGVKRTA). Residues 463 to 473 (KRKRGRPRKKS) are compositionally biased toward basic residues. Residues 534–546 (QGDGTVSKGGRGP) show a composition bias toward gly residues. Residues 606–616 (QEHKDPKATPP) are compositionally biased toward basic and acidic residues.

Belongs to the RFX family. In terms of assembly, homodimer. The RFX heterotetrameric complex consists of 2 molecules of RFX5 and one each of RFXAP and RFX-B/RFXANK; with each subunit representing a separate complementation group. Interacts (via PxLPxI/L motif) with RFXANK (via ankyrin repeats); the interaction is direct. RFX forms cooperative DNA binding complexes with X2BP and CBF/NF-Y. RFX associates with CIITA to form an active transcriptional complex. Phosphorylated. As to expression, ubiquitous.

It localises to the nucleus. Activates transcription from class II MHC promoters. Recognizes X-boxes. Mediates cooperative binding between RFX and NF-Y. RFX binds the X1 box of MHC-II promoters. The chain is DNA-binding protein RFX5 (RFX5) from Homo sapiens (Human).